The chain runs to 198 residues: Transcription factor IND (198 aa).

The disordered stretch occupies residues 1 to 33 (MENGMYKKKGVCDSCVSSKSRSNHSPKRSMMEP). The region spanning 118–167 (ISDDPQTVVARRRRERISEKIRILKRIVPGGAKMDTASMLDEAIRYTKFL) is the bHLH domain.

In terms of assembly, homodimer. Heterodimer; possibly with ALC. In terms of tissue distribution, after fertilization, it is expressed in stripes about four cells wide at the margins of developing wild-type fruit. Also expressed in the inner valve layer, which becomes lignified later in fruit development. Detected in roots.

It is found in the nucleus. Its function is as follows. Transcription regulator required for seed dispersal. Involved in the differentiation of all three cell types required for fruit dehiscence. Acts as the key regulator in a network including SHP and ALC that controls specification of the valve margin. Works with ALC, SHP, and FUL to allow differentiation of the lignified valve layer, the spring-loaded mechanism of fruit that promotes opening. Regulates the expression of the YJ80 marker. The sequence is that of Transcription factor IND (IND) from Arabidopsis thaliana (Mouse-ear cress).